The primary structure comprises 1518 residues: Putative cellulose synthase 2 (1518 aa).

The catalytic stretch occupies residues 1–731; that stretch reads MYGTWFTTGK…EEKLEKQSFV (731 aa). Transmembrane regions (helical) follow at residues 24–44, 71–91, and 105–125; these read PVWVPVVLGVVLMAFVGSVRI, ITVFLMMLSLLVSLRYIVWRL, and LAVLLLLAEAYALMTLCLSYF. The tract at residues 144–237 is catalytic subdomain A; the sequence is QWPSVDVFVP…FAVIFDCDHV (94 aa). D186 is an active-site residue. D233 and D235 together coordinate substrate. The interval 314 to 374 is catalytic subdomain B; the sequence is EAVMGIGGFA…GQRVRWARGM (61 aa). D330 is a catalytic residue. Transmembrane regions (helical) follow at residues 404 to 424, 427 to 447, 465 to 485, 514 to 534, and 543 to 563; these read FLFAIPRLTFLVSPLAFLFLG, IIAASPLAISVYALPHIFHSV, IYETSLALFLVRITIVTLLQP, ILAGVLCAALLRGVFGIVWQF, and FILNTLWVVISLIIVLASIAV. Residues 569–668 form the PilZ domain; the sequence is QTRNAPRVSV…ERQVVSMVFG (100 aa). The interval 732 to 1518 is cyclic di-GMP binding domain; that stretch reads LKPVPRSARH…IARDDLTGEL (787 aa). A disordered region spans residues 765–785; that stretch reads APSPDQSGVTAETPFGDSNTG. The span at 768-785 shows a compositional bias: polar residues; sequence PDQSGVTAETPFGDSNTG. Residues 1481-1501 form a helical membrane-spanning segment; the sequence is ALYLAGLAGAGLAALGVWAWL.

It in the N-terminal section; belongs to the glycosyltransferase 2 family. This sequence in the C-terminal section; belongs to the AcsB/BcsB family.

The protein resides in the cell inner membrane. The enzyme catalyses [(1-&gt;4)-beta-D-glucosyl](n) + UDP-alpha-D-glucose = [(1-&gt;4)-beta-D-glucosyl](n+1) + UDP + H(+). Its pathway is glycan metabolism; bacterial cellulose biosynthesis. This Komagataeibacter xylinus (Gluconacetobacter xylinus) protein is Putative cellulose synthase 2 (bcsABII-A).